Here is a 602-residue protein sequence, read N- to C-terminus: Na(+)/dicarboxylate cotransporter 3 (602 aa).

Over Met1–Arg16 the chain is Cytoplasmic. Residues Leu17 to Lys37 traverse the membrane as a helical segment. Residues Glu38–Glu55 lie on the Extracellular side of the membrane. Residues Ala56–Leu76 traverse the membrane as a helical segment. At Pro77–Cys82 the chain is on the cytoplasmic side. The helical transmembrane segment at Pro83 to Ile103 threads the bilayer. Residues Glu104–Phe137 lie on the Extracellular side of the membrane. The chain crosses the membrane as a helical span at residues Leu138 to Ile158. Residues Leu159–Asn229 lie on the Cytoplasmic side of the membrane. The chain crosses the membrane as a helical span at residues Ile230 to Leu250. Over Thr251–Trp278 the chain is Extracellular. The chain crosses the membrane as a helical span at residues Phe279–Phe299. At Leu300–Gly336 the chain is on the cytoplasmic side. The chain crosses the membrane as a helical span at residues Pro337 to Phe357. The Extracellular portion of the chain corresponds to Thr358–Asn372. Residues Pro373–Pro393 form a helical membrane-spanning segment. Residues Ser394–Gln422 lie on the Cytoplasmic side of the membrane. Residues Glu423–Cys443 constitute an intramembrane region (helical). The Cytoplasmic segment spans residues Glu444–Asn461. The chain crosses the membrane as a helical span at residues Val462–Ala482. The Extracellular portion of the chain corresponds to Ser483 to His505. Residues Pro506–Ser526 traverse the membrane as a helical segment. The Cytoplasmic portion of the chain corresponds to Thr527 to Arg546. A helical transmembrane segment spans residues Thr547 to Ala567. The Extracellular segment spans residues Gln568 to Leu602. 2 N-linked (GlcNAc...) asparagine glycosylation sites follow: Asn586 and Asn596.

Belongs to the SLC13A/DASS transporter (TC 2.A.47) family. NADC subfamily. In terms of tissue distribution, expression is highest in kidney. Detected in placenta, brain, liver and pancreas.

It is found in the cell membrane. The enzyme catalyses succinate(out) + 3 Na(+)(out) = succinate(in) + 3 Na(+)(in). The catalysed reaction is 2-oxoglutarate(out) + 3 Na(+)(out) = 2-oxoglutarate(in) + 3 Na(+)(in). It catalyses the reaction N-acetyl-L-aspartate(out) + 3 Na(+)(out) = N-acetyl-L-aspartate(in) + 3 Na(+)(in). It carries out the reaction glutarate(out) + 3 Na(+)(out) = glutarate(in) + 3 Na(+)(in). The enzyme catalyses fumarate(out) + 3 Na(+)(out) = fumarate(in) + 3 Na(+)(in). The catalysed reaction is malate(out) + 3 Na(+)(out) = malate(in) + 3 Na(+)(in). It catalyses the reaction 2,2-dimethylsuccinate(out) + 3 Na(+)(out) = 2,2-dimethylsuccinate(in) + 3 Na(+)(in). It carries out the reaction 2,3-dimethylsuccinate(out) + 3 Na(+)(out) = 2,3-dimethylsuccinate(in) + 3 Na(+)(in). The enzyme catalyses itaconate(out) + 3 Na(+)(out) = itaconate(in) + 3 Na(+)(in). Its activity is regulated as follows. Li(+) decreases succinate transport in the presence of Na(+). Its function is as follows. High-affinity sodium-dicarboxylate cotransporter that accepts a range of substrates with 4-6 carbon atoms, such as the citric acid cycle intermediates succinate and alpha-ketoglutarate (2-oxoglutarate), as well as other compounds including N-acetyl-L-aspartate. Transports the dicarboxylate into the cell with a probable stoichiometry of 3 Na(+) for 1 divalent dicarboxylate, rendering the process electrogenic. Can transport citrate in a Na(+)-dependent manner, recognizing the divalent form of citrate rather than the trivalent form which is normally found in blood. Imports itaconate in hepatocytes leading to activation of TFEB-dependent lysosomal biogenesis involved in antibacterial innate immune response. The polypeptide is Na(+)/dicarboxylate cotransporter 3 (SLC13A3) (Homo sapiens (Human)).